A 244-amino-acid chain; its full sequence is tRNA (guanine-N(1)-)-methyltransferase (244 aa).

Residues G114 and 134–139 (IGDYVL) each bind S-adenosyl-L-methionine. Residues 220-244 (RRPDLLEKAGASPGKSGSNFGKHDA) form a disordered region.

This sequence belongs to the RNA methyltransferase TrmD family. In terms of assembly, homodimer.

The protein resides in the cytoplasm. It catalyses the reaction guanosine(37) in tRNA + S-adenosyl-L-methionine = N(1)-methylguanosine(37) in tRNA + S-adenosyl-L-homocysteine + H(+). Functionally, specifically methylates guanosine-37 in various tRNAs. The sequence is that of tRNA (guanine-N(1)-)-methyltransferase from Rhizobium johnstonii (strain DSM 114642 / LMG 32736 / 3841) (Rhizobium leguminosarum bv. viciae).